The following is a 63-amino-acid chain: Large ribosomal subunit protein bL32 (63 aa).

The segment at 1 to 27 (MANPKAKMSKSRRDKRRAQFNARTKPV) is disordered. Residues 7 to 18 (KMSKSRRDKRRA) are compositionally biased toward basic residues.

This sequence belongs to the bacterial ribosomal protein bL32 family.

The chain is Large ribosomal subunit protein bL32 from Chlorobium phaeobacteroides (strain DSM 266 / SMG 266 / 2430).